Reading from the N-terminus, the 212-residue chain is 2-C-methyl-D-erythritol 4-phosphate cytidylyltransferase (212 aa).

This sequence belongs to the IspD/TarI cytidylyltransferase family. IspD subfamily.

It catalyses the reaction 2-C-methyl-D-erythritol 4-phosphate + CTP + H(+) = 4-CDP-2-C-methyl-D-erythritol + diphosphate. It participates in isoprenoid biosynthesis; isopentenyl diphosphate biosynthesis via DXP pathway; isopentenyl diphosphate from 1-deoxy-D-xylulose 5-phosphate: step 2/6. In terms of biological role, catalyzes the formation of 4-diphosphocytidyl-2-C-methyl-D-erythritol from CTP and 2-C-methyl-D-erythritol 4-phosphate (MEP). The protein is 2-C-methyl-D-erythritol 4-phosphate cytidylyltransferase of Chlamydia felis (strain Fe/C-56) (Chlamydophila felis).